Consider the following 262-residue polypeptide: Acyl-[acyl-carrier-protein]--UDP-N-acetylglucosamine O-acyltransferase (262 aa).

The protein belongs to the transferase hexapeptide repeat family. LpxA subfamily. Homotrimer.

It is found in the cytoplasm. The enzyme catalyses a (3R)-hydroxyacyl-[ACP] + UDP-N-acetyl-alpha-D-glucosamine = a UDP-3-O-[(3R)-3-hydroxyacyl]-N-acetyl-alpha-D-glucosamine + holo-[ACP]. Its pathway is glycolipid biosynthesis; lipid IV(A) biosynthesis; lipid IV(A) from (3R)-3-hydroxytetradecanoyl-[acyl-carrier-protein] and UDP-N-acetyl-alpha-D-glucosamine: step 1/6. Its function is as follows. Involved in the biosynthesis of lipid A, a phosphorylated glycolipid that anchors the lipopolysaccharide to the outer membrane of the cell. This is Acyl-[acyl-carrier-protein]--UDP-N-acetylglucosamine O-acyltransferase from Haemophilus influenzae (strain PittEE).